A 275-amino-acid polypeptide reads, in one-letter code: Elongation factor Ts (275 aa).

Residues 76–79 are involved in Mg(2+) ion dislocation from EF-Tu; the sequence is TDFV.

This sequence belongs to the EF-Ts family.

Its subcellular location is the cytoplasm. Functionally, associates with the EF-Tu.GDP complex and induces the exchange of GDP to GTP. It remains bound to the aminoacyl-tRNA.EF-Tu.GTP complex up to the GTP hydrolysis stage on the ribosome. The sequence is that of Elongation factor Ts from Mycolicibacterium paratuberculosis (strain ATCC BAA-968 / K-10) (Mycobacterium paratuberculosis).